We begin with the raw amino-acid sequence, 299 residues long: Oxygen-dependent coproporphyrinogen-III oxidase (299 aa).

Position 92 (S92) interacts with substrate. The a divalent metal cation site is built by H96 and H106. The active-site Proton donor is H106. 108–110 lines the substrate pocket; it reads NVR. Residues H145 and H175 each coordinate a divalent metal cation. The segment at 240-275 is important for dimerization; the sequence is YVEFNLVWDRGTLFGLQTGGRTESILMSMPPLVRWE. A substrate-binding site is contributed by 258-260; the sequence is GGR.

It belongs to the aerobic coproporphyrinogen-III oxidase family. In terms of assembly, homodimer. A divalent metal cation serves as cofactor.

It is found in the cytoplasm. It catalyses the reaction coproporphyrinogen III + O2 + 2 H(+) = protoporphyrinogen IX + 2 CO2 + 2 H2O. It functions in the pathway porphyrin-containing compound metabolism; protoporphyrin-IX biosynthesis; protoporphyrinogen-IX from coproporphyrinogen-III (O2 route): step 1/1. Functionally, involved in the heme biosynthesis. Catalyzes the aerobic oxidative decarboxylation of propionate groups of rings A and B of coproporphyrinogen-III to yield the vinyl groups in protoporphyrinogen-IX. This chain is Oxygen-dependent coproporphyrinogen-III oxidase, found in Klebsiella pneumoniae (strain 342).